The sequence spans 39 residues: Cytochrome b559 subunit beta (39 aa).

The helical transmembrane segment at 14 to 30 threads the bilayer; the sequence is WLAIHGLAVPTVFFLGS. Heme is bound at residue His-18.

This sequence belongs to the PsbE/PsbF family. As to quaternary structure, heterodimer of an alpha subunit and a beta subunit. PSII is composed of 1 copy each of membrane proteins PsbA, PsbB, PsbC, PsbD, PsbE, PsbF, PsbH, PsbI, PsbJ, PsbK, PsbL, PsbM, PsbT, PsbX, PsbY, PsbZ, Psb30/Ycf12, at least 3 peripheral proteins of the oxygen-evolving complex and a large number of cofactors. It forms dimeric complexes. Heme b is required as a cofactor.

The protein localises to the plastid. The protein resides in the chloroplast thylakoid membrane. Functionally, this b-type cytochrome is tightly associated with the reaction center of photosystem II (PSII). PSII is a light-driven water:plastoquinone oxidoreductase that uses light energy to abstract electrons from H(2)O, generating O(2) and a proton gradient subsequently used for ATP formation. It consists of a core antenna complex that captures photons, and an electron transfer chain that converts photonic excitation into a charge separation. This chain is Cytochrome b559 subunit beta, found in Staurastrum punctulatum (Green alga).